The primary structure comprises 471 residues: Metalloprotease TIKI homolog (471 aa).

The N-terminal stretch at 1–24 (MAAFTLWILVLNVFLLGFQARKLA) is a signal peptide. The Extracellular segment spans residues 25-449 (SNLKFPIQKC…SRKAAASCTP (425 aa)). N-linked (GlcNAc...) asparagine glycans are attached at residues asparagine 226, asparagine 235, asparagine 284, and asparagine 342. The span at 369 to 402 (KAKKSLNTRRERRKGCRGRRKKSKRCQKKKKRKR) shows a compositional bias: basic residues. Positions 369–406 (KAKKSLNTRRERRKGCRGRRKKSKRCQKKKKRKRPDYS) are disordered. A helical transmembrane segment spans residues 450–470 (IWTVSLALTCAVTCLLTYSGF). Position 471 (arginine 471) is a topological domain, cytoplasmic.

Belongs to the TIKI family. Mn(2+) serves as cofactor. Co(2+) is required as a cofactor.

It is found in the membrane. Functionally, metalloprotease. This is Metalloprotease TIKI homolog from Nematostella vectensis (Starlet sea anemone).